A 215-amino-acid chain; its full sequence is Urease accessory protein UreG 2 (215 aa).

11 to 18 is a binding site for GTP; it reads GPVGSGKT.

Belongs to the SIMIBI class G3E GTPase family. UreG subfamily. In terms of assembly, homodimer. UreD, UreF and UreG form a complex that acts as a GTP-hydrolysis-dependent molecular chaperone, activating the urease apoprotein by helping to assemble the nickel containing metallocenter of UreC. The UreE protein probably delivers the nickel.

The protein localises to the cytoplasm. In terms of biological role, facilitates the functional incorporation of the urease nickel metallocenter. This process requires GTP hydrolysis, probably effectuated by UreG. This is Urease accessory protein UreG 2 from Methylorubrum extorquens (strain PA1) (Methylobacterium extorquens).